The primary structure comprises 239 residues: ATP-dependent dethiobiotin synthetase BioD (239 aa).

15–20 contacts ATP; that stretch reads EIGKTF. Residue T19 participates in Mg(2+) binding. K40 is a catalytic residue. ATP-binding positions include D57, 118 to 121, and 178 to 179; these read EGVG and NH. 2 residues coordinate Mg(2+): D57 and E118.

This sequence belongs to the dethiobiotin synthetase family. As to quaternary structure, homodimer. The cofactor is Mg(2+).

It is found in the cytoplasm. It catalyses the reaction (7R,8S)-7,8-diammoniononanoate + CO2 + ATP = (4R,5S)-dethiobiotin + ADP + phosphate + 3 H(+). The protein operates within cofactor biosynthesis; biotin biosynthesis; biotin from 7,8-diaminononanoate: step 1/2. Its function is as follows. Catalyzes a mechanistically unusual reaction, the ATP-dependent insertion of CO2 between the N7 and N8 nitrogen atoms of 7,8-diaminopelargonic acid (DAPA, also called 7,8-diammoniononanoate) to form a ureido ring. In Burkholderia orbicola (strain MC0-3), this protein is ATP-dependent dethiobiotin synthetase BioD.